We begin with the raw amino-acid sequence, 242 residues long: C-reactive protein 1.4 (242 aa).

The N-terminal stretch at 1 to 24 (MKTFHGPTFGTAVFLYLLLFLTSA) is a signal peptide. One can recognise a Pentraxin (PTX) domain in the interval 30 to 241 (ITSKVKFPPS…GVVLSPNEIC (212 aa)). Residues T60 and Y63 each contribute to the phosphocholine site. 2 disulfide bridges follow: C62–C125 and C112–C144. Ca(2+)-binding residues include D85 and N86. N-linked (GlcNAc...) asparagine glycosylation is present at N147. Ca(2+) is bound by residues E168, Q169, D170, and Q180. A disulfide bond links C207 and C241.

Belongs to the pentraxin family. Homopentamer. Pentraxin (or pentaxin) have a discoid arrangement of 5 non-covalently bound subunits. It depends on Ca(2+) as a cofactor.

It is found in the secreted. Might serve the role of immunoglobulins. The sequence is that of C-reactive protein 1.4 from Limulus polyphemus (Atlantic horseshoe crab).